Consider the following 213-residue polypeptide: Large ribosomal subunit protein uL3 (213 aa).

Q151 carries the post-translational modification N5-methylglutamine.

It belongs to the universal ribosomal protein uL3 family. As to quaternary structure, part of the 50S ribosomal subunit. Forms a cluster with proteins L14 and L19. Methylated by PrmB.

In terms of biological role, one of the primary rRNA binding proteins, it binds directly near the 3'-end of the 23S rRNA, where it nucleates assembly of the 50S subunit. The sequence is that of Large ribosomal subunit protein uL3 from Allorhizobium ampelinum (strain ATCC BAA-846 / DSM 112012 / S4) (Agrobacterium vitis (strain S4)).